Consider the following 132-residue polypeptide: Small ribosomal subunit protein uS8 (132 aa).

This sequence belongs to the universal ribosomal protein uS8 family. Part of the 30S ribosomal subunit. Contacts proteins S5 and S12.

One of the primary rRNA binding proteins, it binds directly to 16S rRNA central domain where it helps coordinate assembly of the platform of the 30S subunit. The protein is Small ribosomal subunit protein uS8 of Cereibacter sphaeroides (strain ATCC 17029 / ATH 2.4.9) (Rhodobacter sphaeroides).